The following is a 332-amino-acid chain: Ornithine carbamoyltransferase, catabolic (332 aa).

Residues 60–63 (STRT), Gln-87, Arg-111, and 138–141 (HPTQ) each bind carbamoyl phosphate. L-ornithine contacts are provided by residues Asn-170, Asp-230, and 234–235 (SM). Carbamoyl phosphate contacts are provided by residues 271–272 (CL) and Arg-316.

The protein belongs to the aspartate/ornithine carbamoyltransferase superfamily. OTCase family.

The protein localises to the cytoplasm. The catalysed reaction is carbamoyl phosphate + L-ornithine = L-citrulline + phosphate + H(+). It functions in the pathway amino-acid degradation; L-arginine degradation via ADI pathway; carbamoyl phosphate from L-arginine: step 2/2. Reversibly catalyzes the transfer of the carbamoyl group from carbamoyl phosphate (CP) to the N(epsilon) atom of ornithine (ORN) to produce L-citrulline. The chain is Ornithine carbamoyltransferase, catabolic (arcB) from Bacillus cereus (strain ATCC 14579 / DSM 31 / CCUG 7414 / JCM 2152 / NBRC 15305 / NCIMB 9373 / NCTC 2599 / NRRL B-3711).